Here is a 420-residue protein sequence, read N- to C-terminus: Tubulin epsilon and delta complex protein 1 (420 aa).

Positions 276–340 form a coiled coil; it reads SEGGLGELES…AVQQELAALQ (65 aa). Positions 342-351 are enriched in polar residues; sequence SWEQSSTPGQ. Residues 342–369 form a disordered region; the sequence is SWEQSSTPGQPQRPHRLVRSKDGAPRPQ. Positions 377 to 409 form a coiled coil; that stretch reads IRTLSAKEACLKKALHQLQRQCQQELARLAGAL.

Interacts with TEDC2. Found in a complex with TEDC1, TEDC2, TUBE1 and TUBD1.

It is found in the cell projection. Its subcellular location is the cilium. The protein resides in the cytoplasm. The protein localises to the cytoskeleton. It localises to the microtubule organizing center. It is found in the centrosome. Its subcellular location is the centriole. Acts as a positive regulator of ciliary hedgehog signaling. Required for centriole stability. May play a role in counteracting perturbation of actin filaments, such as after treatment with the actin depolymerizing microbial metabolite Chivosazole F. The chain is Tubulin epsilon and delta complex protein 1 from Mus musculus (Mouse).